The chain runs to 120 residues: MDYEFRHDIGGQVIALFSMGHEAVGHWLNEEVKGDLALLSRIEQEAAALKGSERQWQLEGHEYTLWLDSEEVMVRANQLALESDELDDGMRYYDEESLSLCGLEDFLQVLTRYRSFIQQH.

This sequence belongs to the UPF0231 family.

This Edwardsiella ictaluri (strain 93-146) protein is UPF0231 protein NT01EI_0766.